Reading from the N-terminus, the 638-residue chain is Chaperone protein DnaK (638 aa).

A Phosphothreonine; by autocatalysis modification is found at Thr-200. The interval 599–623 (LHMAATAEQQSASTGAGAGSSAKVD) is disordered. The span at 609–620 (SASTGAGAGSSA) shows a compositional bias: low complexity.

The protein belongs to the heat shock protein 70 family.

Its function is as follows. Acts as a chaperone. The protein is Chaperone protein DnaK of Xylella fastidiosa (strain M12).